The following is a 170-amino-acid chain: Disulfide bond formation protein B (170 aa).

Over 1-14 the chain is Cytoplasmic; it reads MNDSTLALRRERRL. A helical transmembrane segment spans residues 15–31; sequence LMLLGWVCIALLAGALY. The Periplasmic segment spans residues 32–49; it reads LQYVKNEDPCPLCIIQRY. The cysteines at positions 41 and 44 are disulfide-linked. A helical membrane pass occupies residues 50 to 64; sequence FFAAIGIFAFLAAGI. The Cytoplasmic portion of the chain corresponds to 65-71; sequence RNWRVIW. The helical transmembrane segment at 72-89 threads the bilayer; the sequence is VFELLIAIAAAGGVGTAA. The Periplasmic segment spans residues 90–144; sequence RHLSIQMNPGFSCGFDTLQPIVDSLPPAQWFPGMFKVAGLCETVYPPIFGILLPG. An intrachain disulfide couples Cys-102 to Cys-130. A helical transmembrane segment spans residues 145–163; the sequence is WALIGFAVILVAVASSLWR. Over 164–170 the chain is Cytoplasmic; that stretch reads HRRKLAG.

Belongs to the DsbB family.

Its subcellular location is the cell inner membrane. Functionally, required for disulfide bond formation in some periplasmic proteins. Acts by oxidizing the DsbA protein. The sequence is that of Disulfide bond formation protein B from Burkholderia ambifaria (strain ATCC BAA-244 / DSM 16087 / CCUG 44356 / LMG 19182 / AMMD) (Burkholderia cepacia (strain AMMD)).